Consider the following 1407-residue polypeptide: MAGKSNKSKAKRAAQSTTTNSTTDVKSDAPAPPVAATVPATAPVTAAAAPVATAAAPVTAPDNGTLTAVDSAVPEANEVAPTIPKADESESQVENNDAQPKQGELRLYPVSVKTQSGGKMELQLNPGDSVMDIRQFLLDAPETCYFTCYELLLRNKDGETHHLEDYNEISEVADITIGGCSLEMVAALYDDRSIRAHVHRARDLLSLSTLHSSLSTTLALQYDAALNKVQNPGDKPKSDVPELECLGFMEDVPGSLKKLINSTSEEIRSVENIVFSSFNPPPSHRRLVGDLIYLDVVTLEGNKYCITGTTKTFYVNSSSGNILDPRPSKSGFEAATLIGLLQKLSSKFKKAFREVMEKKASAHPFENVQSLLPPHSWLRTYPVPDHKRDAARAEEALTISYGSELIGMQRDWNEELQSCREFPHTSPQERILRDRALYKVSSDFVDAALNGAIGVISRCIPPINPTDPECLHMYVHNNIFFSFAVDADIEQLSKKRPSNQMTEKVSSSEKVSCTEGTCDNEEHNNCNEAPLVENEQATYASANNDLKGTKLYQEADVPGLYNLAMAIIDYRGHRVVAQSVLPGILQGDKSDALLYGSVDNGKKICWNEDFHAKVLEAAKLLHIKEHSVIDASETVFKLAAPVECKGIVGSDNRHYLLDLMRVTPRDANYTGPESRFCVLRPELITSFCQAESLEKSKFKTKADEGGDDSSNVSADTSKVGDALIDGEANGASNSDQKSISDKQNTTAEDYAAGSSESSKSCDQIAFNPNVFTDFTLGGNQEEIAADEENVKKVSSYLVDVVLPKFIEDLCTLEVSPMDGQTLTEALHAHGVNVRYIGRVANGVKHLPHLWDLCLNEITVRSAKHILKDILRDIEDHDIGSAVSHFLNCFFGNYQTAGGKASANSSTAKNQKKFFGADQPITKKGQGRGKGKASSKKSFSSYMMVDSNILWSDIQEFAKAKYEFELPELSRTTAKKVSVLRNLCQKVGVSIAARKYDFSANTPFETSDILDLRPVIKHSVPVCSEAKDLVEMGKVQLAEGMLSESYTFFSEAFSILQQVTGPMHREVANCCRYLAMVLYHAGDMAGAIMQQHKELIINERCLGLDHPDTAHSYGNMALFYHGLNQTELALQNMGRALLLLGLSSGPDHPDVAATFINVAMMYQDMGKMDTALRYLQEALKKNERLLGPEHIQTAVCYHALAIAFNCMGAFKLSHQHEKKTYDILVKQLGDDDSRTRDSLNWMKTFKMRELQMTAQKQKGQAANAANTQKAIDLLKAHPDLIHAFQNAAATGRTNALNSAVLGETQPRGRGFDERAARAAAEVRKKAAAKGLLVRPQGGVPVQAMPPLSQLQNMINTATVSSEKGGENGEAKVQEKKESSENGKTENLAPAGLGAGLTSLDKKKQKAKK.

Residues 1-12 (MAGKSNKSKAKR) are compositionally biased toward basic residues. Disordered regions lie at residues 1–36 (MAGK…PVAA) and 83–103 (IPKA…PKQG). Residues 14–24 (AQSTTTNSTTD) are compositionally biased toward polar residues. The Clu domain occupies 384-670 (PDHKRDAARA…RVTPRDANYT (287 aa)). The disordered stretch occupies residues 724 to 760 (IDGEANGASNSDQKSISDKQNTTAEDYAAGSSESSKS). Residues 730–747 (GASNSDQKSISDKQNTTA) are compositionally biased toward polar residues. TPR repeat units lie at residues 1025–1058 (AKDL…LQQV), 1067–1100 (ANCC…NERC), 1109–1142 (AHSY…LGLS), 1151–1184 (AATF…NERL), and 1193–1226 (AVCY…LVKQ). Residues 1358–1407 (VSSEKGGENGEAKVQEKKESSENGKTENLAPAGLGAGLTSLDKKKQKAKK) are disordered. The segment covering 1362–1382 (KGGENGEAKVQEKKESSENGK) has biased composition (basic and acidic residues).

It belongs to the CLU family.

The protein localises to the cytoplasm. Functionally, mRNA-binding protein involved in proper cytoplasmic distribution of mitochondria. Together with REC2, REC3 and FMT/CLU, contributes to the establishment of the cellular volume devoted to the chloroplast compartment. The protein is Clustered mitochondria protein of Arabidopsis thaliana (Mouse-ear cress).